The following is a 945-amino-acid chain: Isoleucine--tRNA ligase (945 aa).

The short motif at 66–76 (PYANGDIHLGH) is the 'HIGH' region element. E581 serves as a coordination point for L-isoleucyl-5'-AMP. Positions 622–626 (KMSKS) match the 'KMSKS' region motif. ATP is bound at residue K625. Zn(2+) contacts are provided by C908, C911, C928, and C931.

The protein belongs to the class-I aminoacyl-tRNA synthetase family. IleS type 1 subfamily. Monomer. Requires Zn(2+) as cofactor.

It is found in the cytoplasm. It carries out the reaction tRNA(Ile) + L-isoleucine + ATP = L-isoleucyl-tRNA(Ile) + AMP + diphosphate. Its function is as follows. Catalyzes the attachment of isoleucine to tRNA(Ile). As IleRS can inadvertently accommodate and process structurally similar amino acids such as valine, to avoid such errors it has two additional distinct tRNA(Ile)-dependent editing activities. One activity is designated as 'pretransfer' editing and involves the hydrolysis of activated Val-AMP. The other activity is designated 'posttransfer' editing and involves deacylation of mischarged Val-tRNA(Ile). This Burkholderia vietnamiensis (strain G4 / LMG 22486) (Burkholderia cepacia (strain R1808)) protein is Isoleucine--tRNA ligase.